Here is a 664-residue protein sequence, read N- to C-terminus: DNA ligase (664 aa).

NAD(+) contacts are provided by residues 30 to 34 (DFEFD), 79 to 80 (SL), and glutamate 109. Residue lysine 111 is the N6-AMP-lysine intermediate of the active site. NAD(+) is bound by residues arginine 132, glutamate 169, lysine 284, and lysine 308. Zn(2+) contacts are provided by cysteine 403, cysteine 406, cysteine 421, and cysteine 427. Positions 586 to 664 (NRSEKLKGLT…NEDAFLNMLE (79 aa)) constitute a BRCT domain.

Belongs to the NAD-dependent DNA ligase family. LigA subfamily. The cofactor is Mg(2+). Mn(2+) serves as cofactor.

It catalyses the reaction NAD(+) + (deoxyribonucleotide)n-3'-hydroxyl + 5'-phospho-(deoxyribonucleotide)m = (deoxyribonucleotide)n+m + AMP + beta-nicotinamide D-nucleotide.. In terms of biological role, DNA ligase that catalyzes the formation of phosphodiester linkages between 5'-phosphoryl and 3'-hydroxyl groups in double-stranded DNA using NAD as a coenzyme and as the energy source for the reaction. It is essential for DNA replication and repair of damaged DNA. The chain is DNA ligase from Parabacteroides distasonis (strain ATCC 8503 / DSM 20701 / CIP 104284 / JCM 5825 / NCTC 11152).